The chain runs to 571 residues: Peptide-N4-(N-acetyl-beta-glucosaminyl)asparagine amidase A (571 aa).

N-linked (GlcNAc...) asparagine glycosylation is found at asparagine 121, asparagine 143, asparagine 197, asparagine 241, asparagine 318, asparagine 367, asparagine 390, asparagine 423, asparagine 457, asparagine 481, asparagine 524, and asparagine 529.

In terms of assembly, heterodimer of a large and a small chain. Post-translationally, is highly glycosylated and is largly resistant against self-deglycosylation.

The catalysed reaction is Hydrolysis of an N(4)-(acetyl-beta-D-glucosaminyl)asparagine residue in which the glucosamine residue may be further glycosylated, to yield a (substituted) N-acetyl-beta-D-glucosaminylamine and a peptide containing an aspartate residue.. The chain is Peptide-N4-(N-acetyl-beta-glucosaminyl)asparagine amidase A from Prunus dulcis (Almond).